The chain runs to 214 residues: A-type ATP synthase subunit D (214 aa).

Belongs to the V-ATPase D subunit family. Has multiple subunits with at least A(3), B(3), C, D, E, F, H, I and proteolipid K(x).

The protein resides in the cell membrane. Functionally, component of the A-type ATP synthase that produces ATP from ADP in the presence of a proton gradient across the membrane. The protein is A-type ATP synthase subunit D of Pyrococcus furiosus (strain ATCC 43587 / DSM 3638 / JCM 8422 / Vc1).